A 64-amino-acid chain; its full sequence is Prokaryotic ubiquitin-like protein Pup (64 aa).

Positions 1 to 38 are disordered; the sequence is MAQEQTKRGGGGGEDDDPTGSTAAGQERREKLTEETDD. Residues 21-58 are ARC ATPase binding; it reads STAAGQERREKLTEETDDLLDEIDDVLEENAEDFVRAY. Residues 23 to 52 are a coiled coil; it reads AAGQERREKLTEETDDLLDEIDDVLEENAE. Glutamine 64 is subject to Deamidated glutamine. Residue glutamine 64 forms an Isoglutamyl lysine isopeptide (Gln-Lys) (interchain with K-? in acceptor proteins) linkage.

The protein belongs to the prokaryotic ubiquitin-like protein family. Strongly interacts with the proteasome-associated ATPase ARC through a hydrophobic interface; the interacting region of Pup lies in its C-terminal half. There is one Pup binding site per ARC hexamer ring. In terms of processing, is modified by deamidation of its C-terminal glutamine to glutamate by the deamidase Dop, a prerequisite to the subsequent pupylation process.

It functions in the pathway protein degradation; proteasomal Pup-dependent pathway. Functionally, protein modifier that is covalently attached to lysine residues of substrate proteins, thereby targeting them for proteasomal degradation. The tagging system is termed pupylation. The sequence is that of Prokaryotic ubiquitin-like protein Pup from Mycolicibacterium gilvum (strain PYR-GCK) (Mycobacterium gilvum (strain PYR-GCK)).